The chain runs to 336 residues: Nicotinate-nucleotide--dimethylbenzimidazole phosphoribosyltransferase (336 aa).

Residues 20–41 (GPDAAARAGAEERNGQLTKPPG) are disordered. The active-site Proton acceptor is the Glu-304.

It belongs to the CobT family.

The catalysed reaction is 5,6-dimethylbenzimidazole + nicotinate beta-D-ribonucleotide = alpha-ribazole 5'-phosphate + nicotinate + H(+). It participates in nucleoside biosynthesis; alpha-ribazole biosynthesis; alpha-ribazole from 5,6-dimethylbenzimidazole: step 1/2. In terms of biological role, catalyzes the synthesis of alpha-ribazole-5'-phosphate from nicotinate mononucleotide (NAMN) and 5,6-dimethylbenzimidazole (DMB). This Ruegeria pomeroyi (strain ATCC 700808 / DSM 15171 / DSS-3) (Silicibacter pomeroyi) protein is Nicotinate-nucleotide--dimethylbenzimidazole phosphoribosyltransferase.